Here is a 193-residue protein sequence, read N- to C-terminus: Segregation and condensation protein B (193 aa).

Belongs to the ScpB family. Homodimer. Homodimerization may be required to stabilize the binding of ScpA to the Smc head domains. Component of a cohesin-like complex composed of ScpA, ScpB and the Smc homodimer, in which ScpA and ScpB bind to the head domain of Smc. The presence of the three proteins is required for the association of the complex with DNA.

It localises to the cytoplasm. Functionally, participates in chromosomal partition during cell division. May act via the formation of a condensin-like complex containing Smc and ScpA that pull DNA away from mid-cell into both cell halves. This is Segregation and condensation protein B from Clostridium botulinum (strain 657 / Type Ba4).